The chain runs to 252 residues: MSLPATFDLTPEDAQLLLAANTHLGARNVQVHQEPYVFNARPDGVHVINVGKTWEKLVLAARIIAAIPNPEDVVAISSRTFGQRAVLKFAAHTGATPIAGRFTPGSFTNYITRSFKEPRLVIVTDPRSDAQAIKEASYVNIPVIALTDLDSPSEFVDVAIPCNNRGKHSIGLIWYLLAREVLRLRGALVDRTQPWSIMPDLYFYRDPEEVEQQVAEEATTEEAGEEEAKEEVTEEQAEATEWAEENADNVEW.

Position 2 is an N-acetylserine (Ser-2). A disordered region spans residues 209-252 (EVEQQVAEEATTEEAGEEEAKEEVTEEQAEATEWAEENADNVEW). Residues 218–252 (ATTEEAGEEEAKEEVTEEQAEATEWAEENADNVEW) show a composition bias toward acidic residues.

It belongs to the universal ribosomal protein uS2 family. As to quaternary structure, component of the small ribosomal subunit. Mature ribosomes consist of a small (40S) and a large (60S) subunit. The 40S subunit contains about 33 different proteins and 1 molecule of RNA (18S). The 60S subunit contains about 49 different proteins and 3 molecules of RNA (25S, 5.8S and 5S). Interacts with RPS21.

The protein localises to the cytoplasm. Its function is as follows. Required for the assembly and/or stability of the 40S ribosomal subunit. Required for the processing of the 20S rRNA-precursor to mature 18S rRNA in a late step of the maturation of 40S ribosomal subunits. This is Small ribosomal subunit protein uS2A from Saccharomyces cerevisiae (strain RM11-1a) (Baker's yeast).